A 313-amino-acid chain; its full sequence is Cadmium, cobalt and zinc/H(+)-K(+) antiporter (313 aa).

The Extracellular portion of the chain corresponds to 1–14 (MGHNHNHAGGSNKK). Residues 15–35 (VLLISFIMITGYMIIEAIGGF) traverse the membrane as a helical segment. Residues 36-45 (LTNSLALLSD) lie on the Cytoplasmic side of the membrane. The chain crosses the membrane as a helical span at residues 46–66 (AGHMLSDSISLMVALIAFKLA). The Extracellular segment spans residues 67 to 80 (EKKASHHKTFGYKR). A helical transmembrane segment spans residues 81–101 (FEILAAVINGVALILISLYII). The Cytoplasmic portion of the chain corresponds to 102–117 (YEAIKRFSHPPEVATT). A helical membrane pass occupies residues 118-138 (GMLTISIIGLAVNILVAWIML). At 139 to 159 (NGGDTKNNLNIRGAYLHVISD) the chain is on the extracellular side. Residues 160–180 (MLGSIGAILAAILIIFFGWSW) form a helical membrane-spanning segment. Over 181-313 (ADPAASVIVA…TENPRDHHHH (133 aa)) the chain is Cytoplasmic.

It belongs to the cation diffusion facilitator (CDF) transporter (TC 2.A.4) family. SLC30A subfamily.

The protein localises to the cell membrane. Its function is as follows. Involved in divalent cation and potassium homeostasis in the cell. Catalyzes the active efflux of zinc, cadmium and cobalt, in exchange for potassium and H(+) ions. The polypeptide is Cadmium, cobalt and zinc/H(+)-K(+) antiporter (czcD) (Bacillus velezensis (strain DSM 23117 / BGSC 10A6 / LMG 26770 / FZB42) (Bacillus amyloliquefaciens subsp. plantarum)).